The chain runs to 148 residues: Large ribosomal subunit protein uL15 (148 aa).

The disordered stretch occupies residues M1–V61.

This sequence belongs to the universal ribosomal protein uL15 family. Part of the 50S ribosomal subunit.

Binds to the 23S rRNA. The polypeptide is Large ribosomal subunit protein uL15 (Thermodesulfovibrio yellowstonii (strain ATCC 51303 / DSM 11347 / YP87)).